Here is a 526-residue protein sequence, read N- to C-terminus: MTNMELAAKVIQELVHTGVREFILCAGARNSPMVHILDECKNLKVYSFFEERAAGFFALGRIASTRRPVAVITTSGTAVAELLPAAVEGTYSSLPLIMVTADRPKHYRGSGAPQTIEQVGIFSYYNEVALDLDSENSHLSFKSLSWKKPIHVNVSFEEPLIDGPVPQIHIPSVSERTKLPVQIPLGTLKEMETFVNTHKPLVMVGILPEKAYGTVLDFLKQYKAPVYCEGISSLRGHPDLKDVEIRSGEKMIHRVLEMGVCDSILRIGGIPTARVWRDLEDKYKELPVFSVSFNHFTGLSRPVQHCNSLDLLSQVEFSYPHHENVKVNIEDAARATQIRQLLDKYPDSEQGMIYAISKRMKGSSVYLGNSLPIREWDSSSSHDFPPARVAANRGANGIDGQISTFLGWAHPELENWCLVGDLTALYDLSSLWVTSQLDAKKFRVVVINNGGGQIFHRMFKKEIFINKHQISFESWAKMWNWSYDKWHTIPEDNKELNLADHQIIELSPNWEHTQEFWKEYDLLWKE.

It belongs to the TPP enzyme family. MenD subfamily. In terms of assembly, homodimer. The cofactor is Mg(2+). Requires Mn(2+) as cofactor. Thiamine diphosphate is required as a cofactor.

The catalysed reaction is isochorismate + 2-oxoglutarate + H(+) = 5-enolpyruvoyl-6-hydroxy-2-succinyl-cyclohex-3-ene-1-carboxylate + CO2. Its pathway is quinol/quinone metabolism; 1,4-dihydroxy-2-naphthoate biosynthesis; 1,4-dihydroxy-2-naphthoate from chorismate: step 2/7. It functions in the pathway quinol/quinone metabolism; menaquinone biosynthesis. Functionally, catalyzes the thiamine diphosphate-dependent decarboxylation of 2-oxoglutarate and the subsequent addition of the resulting succinic semialdehyde-thiamine pyrophosphate anion to isochorismate to yield 2-succinyl-5-enolpyruvyl-6-hydroxy-3-cyclohexene-1-carboxylate (SEPHCHC). The protein is 2-succinyl-5-enolpyruvyl-6-hydroxy-3-cyclohexene-1-carboxylate synthase of Bdellovibrio bacteriovorus (strain ATCC 15356 / DSM 50701 / NCIMB 9529 / HD100).